The primary structure comprises 538 residues: tRNA-2-methylthio-N(6)-dimethylallyladenosine synthase (538 aa).

The tract at residues 1–23 is disordered; it reads MNEEQRLGRNGNTDAVSTKEAGS. The 119-residue stretch at 95–213 folds into the MTTase N-terminal domain; sequence KKFLVRTYGC…LPHLLRNALF (119 aa). 6 residues coordinate [4Fe-4S] cluster: cysteine 104, cysteine 140, cysteine 174, cysteine 250, cysteine 254, and cysteine 257. The region spanning 236-466 is the Radical SAM core domain; the sequence is REGKTQAWVN…NALVNDISAQ (231 aa). In terms of domain architecture, TRAM spans 469 to 532; the sequence is LEYQDKVVEV…TWSLNGEMVE (64 aa).

This sequence belongs to the methylthiotransferase family. MiaB subfamily. In terms of assembly, monomer. The cofactor is [4Fe-4S] cluster.

It is found in the cytoplasm. It carries out the reaction N(6)-dimethylallyladenosine(37) in tRNA + (sulfur carrier)-SH + AH2 + 2 S-adenosyl-L-methionine = 2-methylsulfanyl-N(6)-dimethylallyladenosine(37) in tRNA + (sulfur carrier)-H + 5'-deoxyadenosine + L-methionine + A + S-adenosyl-L-homocysteine + 2 H(+). In terms of biological role, catalyzes the methylthiolation of N6-(dimethylallyl)adenosine (i(6)A), leading to the formation of 2-methylthio-N6-(dimethylallyl)adenosine (ms(2)i(6)A) at position 37 in tRNAs that read codons beginning with uridine. This chain is tRNA-2-methylthio-N(6)-dimethylallyladenosine synthase, found in Halalkalibacterium halodurans (strain ATCC BAA-125 / DSM 18197 / FERM 7344 / JCM 9153 / C-125) (Bacillus halodurans).